Here is a 366-residue protein sequence, read N- to C-terminus: UDP-GlcNAc:ribostamycin N-acetylglucosaminyltransferase (366 aa).

The segment covering Ala-342–Gly-352 has biased composition (low complexity). A disordered region spans residues Ala-342–Gly-366. Residues Arg-357 to Gly-366 show a composition bias toward basic and acidic residues.

This sequence belongs to the glycosyltransferase group 1 family. Glycosyltransferase 4 subfamily. It depends on a divalent metal cation as a cofactor.

It catalyses the reaction ribostamycin + UDP-N-acetyl-alpha-D-glucosamine = 2'''-acetyl-6'''-hydroxyneomycin C + UDP + H(+). Its pathway is antibiotic biosynthesis; neomycin biosynthesis. Its function is as follows. Glycosyltransferase involved in the biosynthesis of neomycin by mediating glycosylation of ribostamycin with UDP-GlcNAc as a sugar donor to generate 2'''-acetyl-6'''-hydroxyneomycin C. The protein is UDP-GlcNAc:ribostamycin N-acetylglucosaminyltransferase (neoK) of Streptomyces fradiae (Streptomyces roseoflavus).